The primary structure comprises 215 residues: Nucleoside triphosphate pyrophosphatase (215 aa).

Aspartate 77 (proton acceptor) is an active-site residue.

The protein belongs to the Maf family. The cofactor is a divalent metal cation.

It is found in the cytoplasm. The catalysed reaction is a ribonucleoside 5'-triphosphate + H2O = a ribonucleoside 5'-phosphate + diphosphate + H(+). It catalyses the reaction a 2'-deoxyribonucleoside 5'-triphosphate + H2O = a 2'-deoxyribonucleoside 5'-phosphate + diphosphate + H(+). Nucleoside triphosphate pyrophosphatase. May have a dual role in cell division arrest and in preventing the incorporation of modified nucleotides into cellular nucleic acids. This Rickettsia africae (strain ESF-5) protein is Nucleoside triphosphate pyrophosphatase.